The primary structure comprises 497 residues: Reticulophagy regulator 1 (497 aa).

The disordered stretch occupies residues 1–51; the sequence is MASPAPPEHAEEGCPAPAAEEQAPPSPPPPQASPAERQQQEEEAQEAGAAE. Over 1–59 the chain is Cytoplasmic; it reads MASPAPPEHAEEGCPAPAAEEQAPPSPPPPQASPAERQQQEEEAQEAGAAEGAGLQVEE. The segment covering 13–23 has biased composition (low complexity); it reads GCPAPAAEEQA. A helical transmembrane segment spans residues 60 to 80; sequence AAGRAAAAVTWLLGEPVLWLG. Over 81–95 the chain is Lumenal; sequence CRADELLSWKRPLRS. The tract at residues 84-233 is reticulon homology domain; the sequence is DELLSWKRPL…LLCAFLCPLF (150 aa). A helical membrane pass occupies residues 96–116; it reads LLGFVAANLLFWFLALTPWRV. At 117 to 118 the chain is on the cytoplasmic side; sequence YH. Residues 119–139 form a helical membrane-spanning segment; it reads LISVMILGRVIMQIIKDMVLS. Residues 140–208 are Lumenal-facing; sequence RTRGAQLWRS…LVCSVCTFFT (69 aa). Ser-149 carries the phosphoserine modification. The residue at position 151 (Ser-151) is a Phosphoserine; by CAMK2B. Ser-153 bears the Phosphoserine mark. A helical membrane pass occupies residues 209–229; it reads ILGSYIPGVILSYLLLLCAFL. At 230–497 the chain is on the cytoplasmic side; the sequence is CPLFKCNDIG…GFLSNLLGGH (268 aa). Residues 319-330 are compositionally biased toward polar residues; sequence FNLSEGYTPQTD. Disordered stretches follow at residues 319–365, 377–396, 436–455, and 468–497; these read FNLS…EDEL, KEQL…AAGL, LSQA…GDDF, and SELG…LGGH. Basic and acidic residues-rich tracts occupy residues 334–348 and 377–388; these read DLDR…RDLS and KEQLDSGHRPSK. Residues 443–455 show a composition bias toward acidic residues; sequence PEEDTDTEEGDDF. Residues 453–458 carry the LIR motif motif; it reads DDFELL. A compositionally biased stretch (polar residues) spans 471 to 490; that stretch reads GLTQDQEAEAQQNKKSSGFL.

This sequence belongs to the RETREG family. Homooligomer; oligomerization is enhanced following endoplasmic reticulum stress and is mediated by the reticulon homology domain. Interacts with ATG8 family modifier proteins MAP1LC3A, MAP1LC3B, MAP1LC3C, GABARAP, GABARAPL1 and GABARAPL2. Shows higher affinity for GABARAPL1 than for MAP1LC3A or MAP1LC3B. Phosphorylation at Ser-151 by CAMK2B enhances oligomerization and membrane scission and reticulophagy activity. As to expression, overexpressed in esophageal squamous cell carcinoma.

It localises to the golgi apparatus. It is found in the cis-Golgi network membrane. Its subcellular location is the endoplasmic reticulum membrane. Its function is as follows. Endoplasmic reticulum (ER)-anchored autophagy regulator which mediates ER delivery into lysosomes through sequestration into autophagosomes. Promotes membrane remodeling and ER scission via its membrane bending capacity and targets the fragments into autophagosomes via interaction with ATG8 family proteins. Active under basal conditions. Required for collagen quality control in a LIR motif-dependent manner. Required for long-term survival of nociceptive and autonomic ganglion neurons. (Microbial infection) During SARS-CoV-2 infection, RETREG1-mediated reticulophagy is promoted by SARS-CoV-2 ORF3A protein. This induces endoplasmic reticulum stress and inflammatory responses and facilitates viral infection. This Homo sapiens (Human) protein is Reticulophagy regulator 1.